The primary structure comprises 719 residues: Protein Hook homolog 3 (719 aa).

Positions 7-123 (VDLCESLLTW…RMLQLILGCA (117 aa)) constitute a Calponin-homology (CH) domain. 2 coiled-coil regions span residues 162 to 431 (SIGT…QAQE) and 459 to 665 (EIKE…IVSA). The disordered stretch occupies residues 679 to 719 (EDRLASTGSGQSFLARQRQATSSRRSYPGHVQPATASDVIA). A compositionally biased stretch (low complexity) spans 693-704 (ARQRQATSSRRS).

The protein belongs to the hook family. As to quaternary structure, interacts with microtubules.

It is found in the cytoplasm. Its subcellular location is the cytoskeleton. It localises to the golgi apparatus. Acts as an adapter protein linking the dynein motor complex to various cargos and converts dynein from a non-processive to a highly processive motor in the presence of dynactin. Facilitates the interaction between dynein and dynactin and activates dynein processivity (the ability to move along a microtubule for a long distance without falling off the track). Predominantly recruits 2 dyneins, which increases both the force and speed of the microtubule motor. Component of the FTS/Hook/FHIP complex (FHF complex). The FHF complex may function to promote vesicle trafficking and/or fusion via the homotypic vesicular protein sorting complex (the HOPS complex). May regulate clearance of endocytosed receptors such as MSR1. Participates in defining the architecture and localization of the Golgi complex. FHF complex promotes the distribution of AP-4 complex to the perinuclear area of the cell. In Xenopus laevis (African clawed frog), this protein is Protein Hook homolog 3 (hook3).